The chain runs to 206 residues: Small ribosomal subunit protein uS4 (206 aa).

In terms of domain architecture, S4 RNA-binding spans 98 to 161 (RRLDNVVYRL…RSMELIKNNL (64 aa)).

Belongs to the universal ribosomal protein uS4 family. In terms of assembly, part of the 30S ribosomal subunit. Contacts protein S5. The interaction surface between S4 and S5 is involved in control of translational fidelity.

Its function is as follows. One of the primary rRNA binding proteins, it binds directly to 16S rRNA where it nucleates assembly of the body of the 30S subunit. In terms of biological role, with S5 and S12 plays an important role in translational accuracy. The sequence is that of Small ribosomal subunit protein uS4 from Caldanaerobacter subterraneus subsp. tengcongensis (strain DSM 15242 / JCM 11007 / NBRC 100824 / MB4) (Thermoanaerobacter tengcongensis).